The primary structure comprises 177 residues: O-acetyl-ADP-ribose deacetylase (177 aa).

Residues 1–175 (MKTRIHVVQG…LYERLLTQQG (175 aa)) form the Macro domain. Substrate-binding positions include 11–12 (DI), N25, 33–35 (GVD), and 122–126 (STGVY). D35 functions as the Proton acceptor in the catalytic mechanism.

The protein belongs to the MacroD-type family. YmdB subfamily. As to quaternary structure, homodimer. Interacts with RNase III.

It catalyses the reaction 3''-O-acetyl-ADP-D-ribose + H2O = ADP-D-ribose + acetate + H(+). It carries out the reaction 2''-O-acetyl-ADP-D-ribose + H2O = ADP-D-ribose + acetate + H(+). Deacetylates O-acetyl-ADP ribose to yield ADP-ribose and free acetate. Down-regulates ribonuclease 3 (RNase III) activity. Acts by interacting directly with the region of the ribonuclease that is required for dimerization/activation. This is O-acetyl-ADP-ribose deacetylase from Shigella flexneri serotype 5b (strain 8401).